The chain runs to 415 residues: Tyrosine--tRNA ligase (415 aa).

Tyr-34 serves as a coordination point for L-tyrosine. Residues 39–48 (PSADSLHLGN) carry the 'HIGH' region motif. L-tyrosine contacts are provided by Tyr-162 and Gln-166. The short motif at 224–228 (KFGKS) is the 'KMSKS' region element. Lys-227 is an ATP binding site. An S4 RNA-binding domain is found at 346–413 (IKIIDLLNLA…KRNYFLILWN (68 aa)).

It belongs to the class-I aminoacyl-tRNA synthetase family. TyrS type 1 subfamily. Homodimer.

Its subcellular location is the cytoplasm. It catalyses the reaction tRNA(Tyr) + L-tyrosine + ATP = L-tyrosyl-tRNA(Tyr) + AMP + diphosphate + H(+). Functionally, catalyzes the attachment of tyrosine to tRNA(Tyr) in a two-step reaction: tyrosine is first activated by ATP to form Tyr-AMP and then transferred to the acceptor end of tRNA(Tyr). This is Tyrosine--tRNA ligase from Ureaplasma parvum serovar 3 (strain ATCC 27815 / 27 / NCTC 11736).